Reading from the N-terminus, the 250-residue chain is MADS-box protein J2 (250 aa).

The 61-residue stretch at Met-1–Ser-61 folds into the MADS-box domain. The 91-residue stretch at Thr-87–Arg-177 folds into the K-box domain.

It is found in the nucleus. MADS-box transcription factor that acts redundantly with EJ2 to control meristem maturation and inflorescence architecture. This Solanum lycopersicum (Tomato) protein is MADS-box protein J2.